The following is a 361-amino-acid chain: Phospho-N-acetylmuramoyl-pentapeptide-transferase (361 aa).

A run of 10 helical transmembrane segments spans residues 26-46 (SILA…VLIQ), 73-93 (TMGG…WGDL), 98-118 (VWLV…DDWI), 139-159 (IFGL…AAVT), 168-188 (IALP…IVGF), 200-220 (GLAI…AYAS), 237-257 (AGDL…FLWF), 264-284 (VFMG…IAVI), 289-309 (LVLV…IIQV), and 339-359 (VIVR…ATLK).

It belongs to the glycosyltransferase 4 family. MraY subfamily. The cofactor is Mg(2+).

The protein localises to the cell inner membrane. The enzyme catalyses UDP-N-acetyl-alpha-D-muramoyl-L-alanyl-gamma-D-glutamyl-meso-2,6-diaminopimeloyl-D-alanyl-D-alanine + di-trans,octa-cis-undecaprenyl phosphate = di-trans,octa-cis-undecaprenyl diphospho-N-acetyl-alpha-D-muramoyl-L-alanyl-D-glutamyl-meso-2,6-diaminopimeloyl-D-alanyl-D-alanine + UMP. It participates in cell wall biogenesis; peptidoglycan biosynthesis. Functionally, catalyzes the initial step of the lipid cycle reactions in the biosynthesis of the cell wall peptidoglycan: transfers peptidoglycan precursor phospho-MurNAc-pentapeptide from UDP-MurNAc-pentapeptide onto the lipid carrier undecaprenyl phosphate, yielding undecaprenyl-pyrophosphoryl-MurNAc-pentapeptide, known as lipid I. The sequence is that of Phospho-N-acetylmuramoyl-pentapeptide-transferase from Xylella fastidiosa (strain 9a5c).